The following is a 258-amino-acid chain: Phycoerythrobilin:ferredoxin oxidoreductase (258 aa).

The protein belongs to the HY2 family.

The catalysed reaction is (3Z)-phycoerythrobilin + oxidized 2[4Fe-4S]-[ferredoxin] = 15,16-dihydrobiliverdin + reduced 2[4Fe-4S]-[ferredoxin] + 2 H(+). Catalyzes the two-electron reduction of the C2 and C3(1) diene system of 15,16-dihydrobiliverdin. This is Phycoerythrobilin:ferredoxin oxidoreductase from Prochlorococcus marinus (strain NATL1A).